Here is a 418-residue protein sequence, read N- to C-terminus: Phosphatidylcholine:ceramide cholinephosphotransferase 1 (418 aa).

The 64-residue stretch at 12–75 folds into the SAM domain; the sequence is WSPKKVADWL…LDMIETLKME (64 aa). Position 13 is a phosphoserine (Ser13). Transmembrane regions (helical) follow at residues 141–161, 189–209, 220–240, 281–301, and 309–329; these read FLAF…ISVV, FSIC…QWLL, FFCI…VTTL, MCGD…YLFI, and LWWY…CILL. The active site involves His290. Residues His333 and Asp337 contribute to the active site. The helical transmembrane segment at 335–352 threads the bilayer; sequence TVDVVVAYYITTRLFWWY.

Belongs to the sphingomyelin synthase family. As to expression, widely expressed. Highest expression in the cardiovascular system.

It is found in the golgi apparatus membrane. The catalysed reaction is an N-acylsphing-4-enine + a 1,2-diacyl-sn-glycero-3-phosphocholine = a sphingomyelin + a 1,2-diacyl-sn-glycerol. It catalyses the reaction 1-(9Z-octadecenoyl)-2-acyl-sn-3-glycerol + a sphingomyelin = a 1-(9Z-octadecenoyl)-2-acyl-sn-glycero-3-phosphocholine + an N-acylsphing-4-enine. The enzyme catalyses N-hexadecanoylsphinganine + a 1,2-diacyl-sn-glycero-3-phosphocholine = N-hexadecanoyl-sphinganine-1-phosphocholine + a 1,2-diacyl-sn-glycerol. It carries out the reaction N-hexadecanoyl-(4R)-hydroxysphinganine + a 1,2-diacyl-sn-glycero-3-phosphocholine = N-hexadecanoyl-(4R)-hydroxysphinganine-phosphocholine + a 1,2-diacyl-sn-glycerol. The catalysed reaction is an N-acylsphing-4-enine + a 1,2-diacyl-sn-glycero-3-phosphoethanolamine = an N-acylsphing-4-enine 1-phosphoethanolamine + a 1,2-diacyl-sn-glycerol. The protein operates within sphingolipid metabolism. In terms of biological role, major sphingomyelin synthase at the Golgi apparatus. Catalyzes the reversible transfer of phosphocholine moiety in sphingomyelin biosynthesis: in the forward reaction transfers phosphocholine head group of phosphatidylcholine (PC) on to ceramide (CER) to form ceramide phosphocholine (sphingomyelin, SM) and diacylglycerol (DAG) as by-product, and in the reverse reaction transfers phosphocholine from SM to DAG to form PC and CER. The direction of the reaction depends on the levels of CER and DAG in Golgi membranes. Converts the newly synthesized CER, that is transported from the endoplasmic reticulum to the trans-Golgi by the Cer transport protein (CERT), to SM. Can form a heteromeric complex with glucosylceramide synthase (GCS) increasing SMS activity and reducing glucosylceramide synthesis, a critical mechanism that controls the metabolic fate of CER in the Golgi. Does not use free phosphorylcholine or CDP-choline as donor. Can also transfer phosphoethanolamine head group of phosphatidylethanolamine (PE) on to CER to form ceramide phosphoethanolamine (CPE). Regulates receptor-mediated signal transduction via mitogenic DAG and proapoptotic CER, as well as via SM, a structural component of membrane rafts that serve as platforms for signal transduction and protein sorting. Plays a role in secretory transport via regulation of DAG pool at the Golgi apparatus and its downstream effects on PRKD1. The sequence is that of Phosphatidylcholine:ceramide cholinephosphotransferase 1 (SGMS1) from Sus scrofa (Pig).